The sequence spans 456 residues: Cysteine--tRNA ligase (456 aa).

Position 28 (cysteine 28) interacts with Zn(2+). The 'HIGH' region signature appears at 30 to 40; the sequence is MTVYDYCHLGH. Residues cysteine 209, histidine 234, and glutamate 238 each contribute to the Zn(2+) site. The short motif at 266-270 is the 'KMSKS' region element; it reads KMSKS. Lysine 269 contacts ATP.

This sequence belongs to the class-I aminoacyl-tRNA synthetase family. As to quaternary structure, monomer. The cofactor is Zn(2+).

It is found in the cytoplasm. It carries out the reaction tRNA(Cys) + L-cysteine + ATP = L-cysteinyl-tRNA(Cys) + AMP + diphosphate. This Dechloromonas aromatica (strain RCB) protein is Cysteine--tRNA ligase.